A 365-amino-acid polypeptide reads, in one-letter code: Isoflavone 4'-O-methyltransferase (365 aa).

S-adenosyl-L-methionine is bound by residues V207 to G210, D231, D231 to Q232, D251 to M252, and K265. H269 functions as the Proton acceptor in the catalytic mechanism.

It belongs to the class I-like SAM-binding methyltransferase superfamily. Cation-independent O-methyltransferase family. COMT subfamily.

The catalysed reaction is a 4'-hydroxyisoflavone + S-adenosyl-L-methionine = a 4'-methoxyisoflavone + S-adenosyl-L-homocysteine + H(+). The enzyme catalyses (2R,3S)-2,4',7-trihydroxyisoflavanone + S-adenosyl-L-methionine = (2R,3S)-2,7-dihydroxy-4'-methoxyisoflavanone + S-adenosyl-L-homocysteine + H(+). Functionally, 2-hydroxyisoflavanone 4'-O-methyltransferase involved in the biosynthesis of formononetin. Can use 2,7,4'-trihydroxyisoflavanone as substrate, but not daidzein. The polypeptide is Isoflavone 4'-O-methyltransferase (HI4'OMT) (Lotus japonicus (Lotus corniculatus var. japonicus)).